Here is a 242-residue protein sequence, read N- to C-terminus: B-box zinc finger protein 20 (242 aa).

Positions 5, 8, 28, 33, 58, 61, 81, and 91 each coordinate Zn(2+). A B box-type 1; atypical zinc finger spans residues 5-47 (CAVCDKEEASVFCCADEAALCNGCDRHVHFANKLAGKHLRFSL). The B box-type 2; atypical zinc-finger motif lies at 58–100 (CDICGERRALLFCQEDRAILCRECDIPIHQANEHTKKHNRFLL). Positions 112 to 153 (YPRASNSNSAAAFGRAKTRPKSVSSEVPSSASNEVFTSSSST) are disordered. Low complexity predominate over residues 133 to 153 (SVSSEVPSSASNEVFTSSSST).

Interacts with MED25 and COP1. COP1-mediated ubiquitination and subsequent proteasomal degradation of BBX20 occurs in the dark.

Its subcellular location is the nucleus. Acts as a positive regulator of seedling photomorphogenesis. Plays a negative role in brassinosteroid responses. The chain is B-box zinc finger protein 20 from Arabidopsis thaliana (Mouse-ear cress).